The primary structure comprises 68 residues: uncharacterized protein (68 aa).

The tract at residues 1–42 (MHLCQNGHYYKPHRASAEKVPYLKKKKKNSRNEGKAKKKNEK) is disordered.

This is an uncharacterized protein from Saccharomyces cerevisiae (strain ATCC 204508 / S288c) (Baker's yeast).